A 382-amino-acid chain; its full sequence is Flap endonuclease 1 (382 aa).

An N-domain region spans residues 1–105; sequence MGIKGLNAII…HELTKRSSRR (105 aa). Mg(2+) is bound at residue D34. DNA contacts are provided by R47 and R71. Mg(2+) is bound by residues D87, E156, E158, D177, and D179. Residues 120–251 are I-domain; that stretch reads EKMKQERRLV…VTALKLIKTH (132 aa). A DNA-binding site is contributed by E156. The DNA site is built by G229 and D231. D231 contributes to the Mg(2+) binding site. Positions 339 to 347 are interaction with PCNA; that stretch reads IQGRLDGFF. Residues 358 to 382 are disordered; sequence AAAAKRAQENKKLNKNKNKVTKGRR. Residues 370-382 show a composition bias toward basic residues; the sequence is LNKNKNKVTKGRR.

This sequence belongs to the XPG/RAD2 endonuclease family. FEN1 subfamily. As to quaternary structure, interacts with PCNA. Three molecules of RAD27 bind to one PCNA trimer with each molecule binding to one PCNA monomer. PCNA stimulates the nuclease activity without altering cleavage specificity. The cofactor is Mg(2+). Phosphorylated. Phosphorylation upon DNA damage induces relocalization to the nuclear plasma.

It is found in the nucleus. It localises to the nucleolus. The protein localises to the nucleoplasm. The protein resides in the mitochondrion. In terms of biological role, structure-specific nuclease with 5'-flap endonuclease and 5'-3' exonuclease activities involved in DNA replication and repair. During DNA replication, cleaves the 5'-overhanging flap structure that is generated by displacement synthesis when DNA polymerase encounters the 5'-end of a downstream Okazaki fragment. It enters the flap from the 5'-end and then tracks to cleave the flap base, leaving a nick for ligation. Also involved in the long patch base excision repair (LP-BER) pathway, by cleaving within the apurinic/apyrimidinic (AP) site-terminated flap. Acts as a genome stabilization factor that prevents flaps from equilibrating into structures that lead to duplications and deletions. Also possesses 5'-3' exonuclease activity on nicked or gapped double-stranded DNA, and exhibits RNase H activity. Also involved in replication and repair of rDNA and in repairing mitochondrial DNA. In Saccharomyces cerevisiae (strain YJM789) (Baker's yeast), this protein is Flap endonuclease 1.